A 216-amino-acid polypeptide reads, in one-letter code: Maintenance of carboxysome distribution protein A (216 aa).

7 residues coordinate ATP: G16, G17, G19, K20, T21, T22, and Q45. T21 contacts Mg(2+).

This sequence belongs to the ParA family. McdA subfamily. Self-associates, associates with McdB.

The protein resides in the cytoplasm. It localises to the nucleoid. The enzyme catalyses ATP + H2O = ADP + phosphate + H(+). Its function is as follows. McdA and McdB together mediate carboxysome positioning on the nucleoid and prevent their aggregation in the cell. McdA is an ATPase that forms dynamic gradients on the nucleoid in response to adapter protein McdB, which associates with carboxysomes. The interplay between McdA gradients on the nucleoid and McdB-bound carboxysomes result in the equal spacing of Cbs along the cell length. Incorrect positioning (aggregation) of carboxysomes results in reduced CO(2) fixation by encapsulated form 1 ribulose-1,5-bisphosphate carboxylase (RuBisCO, cbbL/cbbS), which leads to slower growth. The protein is Maintenance of carboxysome distribution protein A of Halothiobacillus neapolitanus (strain ATCC 23641 / c2) (Thiobacillus neapolitanus).